A 540-amino-acid chain; its full sequence is Beta-secretase (540 aa).

An N-terminal signal peptide occupies residues 1 to 31; it reads MHFSLPTSRIVVVVPAAAICIVCVLIETCTA. The 355-residue stretch at 81–435 folds into the Peptidase A1 domain; it reads YYIEVDIGTP…DRENKRVGFA (355 aa). Residues Asp-99 and Asp-302 contribute to the active site. 3 disulfide bridges follow: Cys-222/Cys-439, Cys-291/Cys-469, and Cys-345/Cys-397. A helical membrane pass occupies residues 483–503; the sequence is ITAYVLAAICLVCLIPVIVFA. The Cytoplasmic portion of the chain corresponds to 504-540; sequence LTHQINKRCKGRRGRGVVNHHRLDQEGLAENEPNSDP.

This sequence belongs to the peptidase A1 family.

The protein localises to the membrane. This is Beta-secretase from Strongylocentrotus purpuratus (Purple sea urchin).